The sequence spans 214 residues: Phosphoenolpyruvate guanylyltransferase (214 aa).

Threonine 148, glycine 163, and serine 166 together coordinate phosphoenolpyruvate.

It belongs to the CofC family.

It carries out the reaction phosphoenolpyruvate + GTP + H(+) = enolpyruvoyl-2-diphospho-5'-guanosine + diphosphate. Its pathway is cofactor biosynthesis; coenzyme F420 biosynthesis. Its function is as follows. Guanylyltransferase that catalyzes the activation of phosphoenolpyruvate (PEP) as enolpyruvoyl-2-diphospho-5'-guanosine, via the condensation of PEP with GTP. It is involved in the biosynthesis of coenzyme F420, a hydride carrier cofactor. This chain is Phosphoenolpyruvate guanylyltransferase, found in Mycolicibacterium gilvum (strain PYR-GCK) (Mycobacterium gilvum (strain PYR-GCK)).